Reading from the N-terminus, the 190-residue chain is Peptide deformylase (190 aa).

Cys94 and His136 together coordinate Fe cation. Glu137 is a catalytic residue. His140 is a Fe cation binding site.

The protein belongs to the polypeptide deformylase family. Requires Fe(2+) as cofactor.

The catalysed reaction is N-terminal N-formyl-L-methionyl-[peptide] + H2O = N-terminal L-methionyl-[peptide] + formate. Functionally, removes the formyl group from the N-terminal Met of newly synthesized proteins. Requires at least a dipeptide for an efficient rate of reaction. N-terminal L-methionine is a prerequisite for activity but the enzyme has broad specificity at other positions. This Chlorobium phaeovibrioides (strain DSM 265 / 1930) (Prosthecochloris vibrioformis (strain DSM 265)) protein is Peptide deformylase.